The chain runs to 305 residues: Aurora/IPL1-related protein kinase 2 (305 aa).

The Protein kinase domain maps to 30–280 (FEIGRPLGKG…LEQVKEHYWI (251 aa)). ATP-binding positions include 36–44 (LGKGKFGSV) and Lys59. Asp153 functions as the Proton acceptor in the catalytic mechanism.

This sequence belongs to the protein kinase superfamily. Ser/Thr protein kinase family. Aurora subfamily. Component of the CPC complex which consists of icp-1; csc-1; bir-1 and air-2. Within the complex, interacts with icp-1; csc-1 and bir-1. Interacts with zen-4. Interacts with tlk-1 and bmk-1. In terms of processing, phosphorylated. Increased phosphorylation upon chromatin obstructions at anaphase.

It localises to the cytoplasm. It is found in the cytoskeleton. Its subcellular location is the chromosome. The protein localises to the midbody. The protein resides in the spindle. The catalysed reaction is L-seryl-[protein] + ATP = O-phospho-L-seryl-[protein] + ADP + H(+). The enzyme catalyses L-threonyl-[protein] + ATP = O-phospho-L-threonyl-[protein] + ADP + H(+). Its function is as follows. Serine/threonine-protein kinase component of the chromosomal passenger complex (CPC), a complex that acts as a key regulator of chromosome segregation and cytokinesis. The CPC complex has essential functions at the centromere in ensuring correct chromosome alignment and segregation. Required for histone H3 phosphorylation during segregation of homologous chromosomes in meiosis and mitosis. Required for histone H3 'Ser-10' phosphorylation. Phosphorylates tlk-1 at 'Ser-634', which enhances its activity. Phosphorylates zen-4 at 'Ser-680'. Required for the recruitment of bub-1 to the ring-shaped domain between chromosomes during meiotic anaphase I. Also required for the localization of the condensin I complex subunit smc-4 to mitotic chromosomes. Acts at the spindle midzone and the midbody to prevent cleavage furrow regression upon chromatin obstructions during cytokinesis. This is Aurora/IPL1-related protein kinase 2 from Caenorhabditis elegans.